The chain runs to 250 residues: Entry-fusion complex associated protein OPG095 (250 aa).

Gly2 carries the N-myristoyl glycine; by host lipid modification. The interval 2–12 (GAAASIQTTVN) is targeting to MV membrane. Residues 2–183 (GAAASIQTTV…IAPRQVAGTG (182 aa)) lie on the Virion surface side of the membrane. 3 disulfide bridges follow: Cys34–Cys57, Cys49–Cys136, and Cys116–Cys158. The chain crosses the membrane as a helical span at residues 184–204 (VQFYMIVIGVIILAALFMYYA). At 205 to 250 (KRMLFTSTNDKIKLILANKENVHWTTYMDTFFRTSPMIIATTDIQN) the chain is on the intravirion side.

It belongs to the orthopoxvirus OPG095 family. In terms of assembly, component of the entry fusion complex (EFC) composed of OPG053, OPG076, OPG086, OPG094, OPG095, OPG099, OPG107, OPG143, OPG104, OPG147 and OPG155. Except for OPG095 and OPG053, each of the EFC proteins is required for assembly or stability of the complex. In terms of processing, myristoylated. Post-translationally, disulfid bonds are oxidized in the cytoplasm by OPG088 protein. Unglycosylated because produced in viral factories instead of the classic ER -Golgi route.

The protein resides in the virion membrane. Component of the entry fusion complex (EFC), which consists of 11 proteins. During cell infection, this complex mediates entry of the virion core into the host cytoplasm by a two-step mechanism consisting of lipid mixing of the viral and cellular membranes and subsequent pore formation. This Monkeypox virus protein is Entry-fusion complex associated protein OPG095 (OPG099).